A 120-amino-acid polypeptide reads, in one-letter code: Nitrogen regulatory protein GlnK3 (120 aa).

ADP is bound by residues Thr40 and 48 to 50 (GEQ). ATP is bound by residues Thr40 and 48 to 50 (GEQ). Residues 48–52 (GEQKG) and Lys69 each bind 2-oxoglutarate. ADP is bound by residues Val75 and 98 to 101 (GDGR). Residues Val75 and 98 to 101 (GDGR) each bind ATP. Gly98 serves as a coordination point for 2-oxoglutarate.

It belongs to the P(II) protein family. As to quaternary structure, homotrimer. Interacts and forms a complex with Amt3.

It localises to the cytoplasm. Activity is influenced by intracellular pools of the effector molecules ATP, ADP and 2-oxoglutarate. It senses the cellular nitrogen status through 2-oxoglutarate, and the energy level of the cell by binding both ATP and ADP with different affinities. ATP and 2-oxoglutarate prohibit binding to Amt3. ADP promotes the complex formation. Functionally, involved in the regulation of nitrogen metabolism. Regulates the activity of its targets by protein-protein interaction in response to the nitrogen status of the cell. Regulates the activity of the ammonia channel Amt3 via direct interaction. In Archaeoglobus fulgidus (strain ATCC 49558 / DSM 4304 / JCM 9628 / NBRC 100126 / VC-16), this protein is Nitrogen regulatory protein GlnK3.